The primary structure comprises 433 residues: Arrestin domain-containing protein 1 (433 aa).

Disordered stretches follow at residues 296-322 and 349-372; these read GLGLPPGAPPLVVPSAPPQEEAEAEAA and LSSVPGAPEPCPQDGSPASHPLHP. A compositionally biased stretch (pro residues) spans 301-312; sequence PGAPPLVVPSAP. 2 consecutive short sequence motifs (PPxY motif) follow at residues 402-405 and 415-418; these read PPEY and PPSY.

The protein belongs to the arrestin family. In terms of assembly, interacts (via PPxY motifs) with ITCH (via WW domains); the interaction is direct and participates in the recruitment of the ubiquitin-protein ligase ITCH to the NOTCH1 receptor. Interacts with ARRB1 and ARRB2; the interaction is direct. Interacts with TSG101; may recruit TSG101 to the plasma membrane. Interacts (via PPxY motifs) with WWP2 (via WW domains); ubiquitinates ARRDC1. Interacts with SLC11A2; controls the incorporation of SLC11A2 into extracellular vesicles through an ubiquitination-dependent mechanism. Interacts with WWP1 (via WW domains). Interacts with NEDD4 (via WW domains). Interacts with PDCD6IP. Ubiquitinated. Ubiquitination by WWP2; promotes localization to extracellular microvesicles. Ubiquitinated by WWP1.

It localises to the cell membrane. In terms of biological role, functions as an adapter recruiting ubiquitin-protein ligases to their specific substrates. Through an ubiquitination-dependent mechanism plays for instance a role in the incorporation of SLC11A2 into extracellular vesicles. More generally, plays a role in the extracellular transport of proteins between cells through the release in the extracellular space of microvesicles. By participating in the ITCH-mediated ubiquitination and subsequent degradation of NOTCH1, negatively regulates the NOTCH signaling pathway. The chain is Arrestin domain-containing protein 1 from Homo sapiens (Human).